Here is a 182-residue protein sequence, read N- to C-terminus: dTTP/UTP pyrophosphatase (182 aa).

Catalysis depends on aspartate 64, which acts as the Proton acceptor.

The protein belongs to the Maf family. YhdE subfamily. It depends on a divalent metal cation as a cofactor.

The protein resides in the cytoplasm. It catalyses the reaction dTTP + H2O = dTMP + diphosphate + H(+). The catalysed reaction is UTP + H2O = UMP + diphosphate + H(+). In terms of biological role, nucleoside triphosphate pyrophosphatase that hydrolyzes dTTP and UTP. May have a dual role in cell division arrest and in preventing the incorporation of modified nucleotides into cellular nucleic acids. The chain is dTTP/UTP pyrophosphatase from Thermosipho melanesiensis (strain DSM 12029 / CIP 104789 / BI429).